A 299-amino-acid chain; its full sequence is MTTVIDGKNVAASVIETVKSATSALESETGVRAGLAVVIVGDDPASHTYVSAKSRMAKECGFLSVQHTLPEETSQEELAALVAELNADPSIHGILVQLPLPKHLRSEPIIQSILPEKDVDGLHVVNAGKLATGDLEGGLVSCTPAGAMVFVRRTYGDDLSGLNAVVIGRSNLFGKPMSALLLAANATVTTAHSRTKDLAAVCRNADILVAAVGRPEMVKADWVKPGAMVVDVGINRVPAPERGEGRTKLVGDVAFDECAKVAGVITPVPGGVGPMTIAMLMANTIIAACRMAGRKPPKF.

NADP(+) contacts are provided by residues 168 to 170, serine 193, and isoleucine 234; that span reads GRS.

The protein belongs to the tetrahydrofolate dehydrogenase/cyclohydrolase family. In terms of assembly, homodimer.

It carries out the reaction (6R)-5,10-methylene-5,6,7,8-tetrahydrofolate + NADP(+) = (6R)-5,10-methenyltetrahydrofolate + NADPH. The enzyme catalyses (6R)-5,10-methenyltetrahydrofolate + H2O = (6R)-10-formyltetrahydrofolate + H(+). The protein operates within one-carbon metabolism; tetrahydrofolate interconversion. In terms of biological role, catalyzes the oxidation of 5,10-methylenetetrahydrofolate to 5,10-methenyltetrahydrofolate and then the hydrolysis of 5,10-methenyltetrahydrofolate to 10-formyltetrahydrofolate. This Rhizobium meliloti (strain 1021) (Ensifer meliloti) protein is Bifunctional protein FolD 2.